Consider the following 71-residue polypeptide: uncharacterized protein (71 aa).

The signal sequence occupies residues Met-1–Ser-19.

This is an uncharacterized protein from Pasteurella multocida (strain Pm70).